A 684-amino-acid chain; its full sequence is Glycine--tRNA ligase beta subunit (684 aa).

Belongs to the class-II aminoacyl-tRNA synthetase family. In terms of assembly, tetramer of two alpha and two beta subunits.

The protein localises to the cytoplasm. The catalysed reaction is tRNA(Gly) + glycine + ATP = glycyl-tRNA(Gly) + AMP + diphosphate. The protein is Glycine--tRNA ligase beta subunit of Pseudomonas savastanoi pv. phaseolicola (strain 1448A / Race 6) (Pseudomonas syringae pv. phaseolicola (strain 1448A / Race 6)).